Consider the following 201-residue polypeptide: Molybdenum cofactor guanylyltransferase (201 aa).

GTP-binding positions include 15 to 17 (LCG), Lys28, Asp74, and Asp104. A Mg(2+)-binding site is contributed by Asp104.

Belongs to the MobA family. As to quaternary structure, monomer. It depends on Mg(2+) as a cofactor.

It localises to the cytoplasm. The catalysed reaction is Mo-molybdopterin + GTP + H(+) = Mo-molybdopterin guanine dinucleotide + diphosphate. Functionally, transfers a GMP moiety from GTP to Mo-molybdopterin (Mo-MPT) cofactor (Moco or molybdenum cofactor) to form Mo-molybdopterin guanine dinucleotide (Mo-MGD) cofactor. The sequence is that of Molybdenum cofactor guanylyltransferase from Ectopseudomonas mendocina (strain ymp) (Pseudomonas mendocina).